Consider the following 120-residue polypeptide: Ribosome-binding factor A (120 aa).

Belongs to the RbfA family. Monomer. Binds 30S ribosomal subunits, but not 50S ribosomal subunits or 70S ribosomes.

The protein resides in the cytoplasm. Its function is as follows. One of several proteins that assist in the late maturation steps of the functional core of the 30S ribosomal subunit. Associates with free 30S ribosomal subunits (but not with 30S subunits that are part of 70S ribosomes or polysomes). Required for efficient processing of 16S rRNA. May interact with the 5'-terminal helix region of 16S rRNA. In Borrelia garinii subsp. bavariensis (strain ATCC BAA-2496 / DSM 23469 / PBi) (Borreliella bavariensis), this protein is Ribosome-binding factor A.